Consider the following 184-residue polypeptide: Large ribosomal subunit protein uL6 (184 aa).

Belongs to the universal ribosomal protein uL6 family. Part of the 50S ribosomal subunit.

In terms of biological role, this protein binds to the 23S rRNA, and is important in its secondary structure. It is located near the subunit interface in the base of the L7/L12 stalk, and near the tRNA binding site of the peptidyltransferase center. The polypeptide is Large ribosomal subunit protein uL6 (Amoebophilus asiaticus (strain 5a2)).